A 365-amino-acid chain; its full sequence is Peptide chain release factor 2 (365 aa).

The residue at position 252 (Gln252) is an N5-methylglutamine.

The protein belongs to the prokaryotic/mitochondrial release factor family. Methylated by PrmC. Methylation increases the termination efficiency of RF2.

The protein resides in the cytoplasm. Its function is as follows. Peptide chain release factor 2 directs the termination of translation in response to the peptide chain termination codons UGA and UAA. This Colwellia psychrerythraea (strain 34H / ATCC BAA-681) (Vibrio psychroerythus) protein is Peptide chain release factor 2.